A 633-amino-acid chain; its full sequence is NADPH-dependent diflavin oxidoreductase 1 (633 aa).

A Flavodoxin-like domain is found at 5–149 (CTIIYATESG…EVEKWSQELI (145 aa)). Residues 11 to 16 (TESGTS), 58 to 61 (STTG), and D131 contribute to the FMN site. One can recognise an FAD-binding FR-type domain in the interval 196-442 (TQFYKSKLKV…FIKESGARLP (247 aa)). FAD contacts are provided by residues 377–380 (RPFS) and 412–415 (GLCS). Residues T456, 520–521 (SR), 528–532 (KVYVQ), and D565 each bind NADP(+). Residues 580–610 (KNNNNNNNNNNNNNNNNNNNNNNNNNDDENN) are disordered. Low complexity predominate over residues 581 to 604 (NNNNNNNNNNNNNNNNNNNNNNNN). W633 contacts FAD.

It belongs to the NADPH-dependent diflavin oxidoreductase NDOR1 family. This sequence in the N-terminal section; belongs to the flavodoxin family. In the C-terminal section; belongs to the flavoprotein pyridine nucleotide cytochrome reductase family. Requires FAD as cofactor. FMN is required as a cofactor.

The protein resides in the cytoplasm. The enzyme catalyses 2 oxidized [2Fe-2S]-[protein] + NADPH = 2 reduced [2Fe-2S]-[protein] + NADP(+) + H(+). NADPH-dependent reductase which is a central component of the cytosolic iron-sulfur (Fe-S) protein assembly (CIA) machinery. Transfers electrons from NADPH via its FAD and FMN prosthetic groups to the [2Fe-2S] cluster of the anamorsin/DRE2 homolog, another key component of the CIA machinery. In turn, this reduced cluster provides electrons for assembly of cytosolic iron-sulfur cluster proteins. The sequence is that of NADPH-dependent diflavin oxidoreductase 1 (redC) from Dictyostelium discoideum (Social amoeba).